The primary structure comprises 209 residues: Ribosomal RNA large subunit methyltransferase E (209 aa).

Glycine 63, tryptophan 65, aspartate 83, aspartate 99, and aspartate 124 together coordinate S-adenosyl-L-methionine. The active-site Proton acceptor is the lysine 164.

Belongs to the class I-like SAM-binding methyltransferase superfamily. RNA methyltransferase RlmE family.

The protein localises to the cytoplasm. The catalysed reaction is uridine(2552) in 23S rRNA + S-adenosyl-L-methionine = 2'-O-methyluridine(2552) in 23S rRNA + S-adenosyl-L-homocysteine + H(+). Its function is as follows. Specifically methylates the uridine in position 2552 of 23S rRNA at the 2'-O position of the ribose in the fully assembled 50S ribosomal subunit. The sequence is that of Ribosomal RNA large subunit methyltransferase E from Vibrio parahaemolyticus serotype O3:K6 (strain RIMD 2210633).